We begin with the raw amino-acid sequence, 106 residues long: Integration host factor subunit alpha (106 aa).

This sequence belongs to the bacterial histone-like protein family. As to quaternary structure, heterodimer of an alpha and a beta chain.

This protein is one of the two subunits of integration host factor, a specific DNA-binding protein that functions in genetic recombination as well as in transcriptional and translational control. This is Integration host factor subunit alpha from Nitrobacter winogradskyi (strain ATCC 25391 / DSM 10237 / CIP 104748 / NCIMB 11846 / Nb-255).